Consider the following 265-residue polypeptide: 3-methyl-2-oxobutanoate hydroxymethyltransferase (265 aa).

Mg(2+) contacts are provided by Asp-44 and Asp-83. 3-methyl-2-oxobutanoate is bound by residues 44 to 45 (DS), Asp-83, and Lys-113. Glu-115 contacts Mg(2+). The Proton acceptor role is filled by Glu-183.

It belongs to the PanB family. As to quaternary structure, homodecamer; pentamer of dimers. Requires Mg(2+) as cofactor.

It localises to the cytoplasm. The catalysed reaction is 3-methyl-2-oxobutanoate + (6R)-5,10-methylene-5,6,7,8-tetrahydrofolate + H2O = 2-dehydropantoate + (6S)-5,6,7,8-tetrahydrofolate. It functions in the pathway cofactor biosynthesis; (R)-pantothenate biosynthesis; (R)-pantoate from 3-methyl-2-oxobutanoate: step 1/2. Its function is as follows. Catalyzes the reversible reaction in which hydroxymethyl group from 5,10-methylenetetrahydrofolate is transferred onto alpha-ketoisovalerate to form ketopantoate. The chain is 3-methyl-2-oxobutanoate hydroxymethyltransferase from Leptospira borgpetersenii serovar Hardjo-bovis (strain L550).